The following is a 284-amino-acid chain: Nucleotide-binding protein in ptsO 5'region (284 aa).

Position 8 to 15 (8 to 15 (GRSGSGKS)) interacts with ATP. 60–63 (DARN) contacts GTP.

The protein belongs to the RapZ-like family.

Functionally, displays ATPase and GTPase activities. The protein is Nucleotide-binding protein in ptsO 5'region of Pseudomonas putida (Arthrobacter siderocapsulatus).